The primary structure comprises 318 residues: MAESLLELKKKIASIQKTGQITEAMRMVSGVKLNRTEKLDQEYTIYNDKVRATVSHLMSSQIVNQLGKETNEYSEFSGQSNIDYSSFFDLGTLASLVQPRKEIKSTGYLVISGDRGLVGSYNSQVIKNMMSIFKDADAQNKDVKILAVGSVAAQFFKKQNLNVVYEYSGVSDVPTYNEVRDIVQTAVKMYLNGVYDELFVCYTHHVNTLTSAFRVESMLPISDIDINHKETMPKDYIIEPDIDSVLKTVLPQFAKSMIFGAILDAKTAEHASSMTAMQSASQNADDVVSGLKTKLNRARQAQITTEITEIIGGANALE.

The protein belongs to the ATPase gamma chain family. In terms of assembly, F-type ATPases have 2 components, CF(1) - the catalytic core - and CF(0) - the membrane proton channel. CF(1) has five subunits: alpha(3), beta(3), gamma(1), delta(1), epsilon(1). CF(0) has three main subunits: a, b and c.

It localises to the cell membrane. Produces ATP from ADP in the presence of a proton gradient across the membrane. The gamma chain is believed to be important in regulating ATPase activity and the flow of protons through the CF(0) complex. The protein is ATP synthase gamma chain of Lactobacillus johnsonii (strain CNCM I-12250 / La1 / NCC 533).